The chain runs to 402 residues: Sulfate adenylyltransferase (402 aa).

This sequence belongs to the sulfate adenylyltransferase family.

It carries out the reaction sulfate + ATP + H(+) = adenosine 5'-phosphosulfate + diphosphate. It participates in sulfur metabolism; hydrogen sulfide biosynthesis; sulfite from sulfate: step 1/3. This chain is Sulfate adenylyltransferase, found in Vesicomyosocius okutanii subsp. Calyptogena okutanii (strain HA).